Consider the following 199-residue polypeptide: Protein-methionine-sulfoxide reductase heme-binding subunit MsrQ (199 aa).

Transmembrane regions (helical) follow at residues 8–28, 82–102, 116–136, 149–169, and 171–191; these read ITWL…WLFW, LWCF…ELGI, PYLT…LTST, FLHN…LWSV, and ILSP…AWRY.

This sequence belongs to the MsrQ family. Heterodimer of a catalytic subunit (MsrP) and a heme-binding subunit (MsrQ). It depends on FMN as a cofactor. Heme b serves as cofactor.

The protein resides in the cell inner membrane. Part of the MsrPQ system that repairs oxidized periplasmic proteins containing methionine sulfoxide residues (Met-O), using respiratory chain electrons. Thus protects these proteins from oxidative-stress damage caused by reactive species of oxygen and chlorine generated by the host defense mechanisms. MsrPQ is essential for the maintenance of envelope integrity under bleach stress, rescuing a wide series of structurally unrelated periplasmic proteins from methionine oxidation. MsrQ provides electrons for reduction to the reductase catalytic subunit MsrP, using the quinone pool of the respiratory chain. In Enterobacter sp. (strain 638), this protein is Protein-methionine-sulfoxide reductase heme-binding subunit MsrQ.